The chain runs to 71 residues: Conotoxin PnMEKL-032 (71 aa).

The signal sequence occupies residues 1 to 19; it reads MQKLIILLLVAAVLMSTQA. The propeptide occupies 20–46; sequence LFQEKRLKEKINFLSKEKADAEKQQKR. 3 disulfide bridges follow: C48–C62, C55–C66, and C61–C70.

The protein belongs to the conotoxin O2 superfamily. As to expression, expressed by the venom duct.

It is found in the secreted. The chain is Conotoxin PnMEKL-032 from Conus pennaceus (Feathered cone).